We begin with the raw amino-acid sequence, 880 residues long: MDNKNISTTYNPKEFEERLYSNWQEKKYFTPVIDKSKKPYTIIMPPPNITGKLHLGHALDNTLQDMLIRFKRMQGYCTLWLPGQDHASIATEVKVENELLKEGLYKKEMGREAFLEKVWEWTDEYRERIREQLKKMGCSADFTREAFTMDENLSKAVRHVFVKLYKEGLIYQGNRITNWCPKCQTALSDAEIEYEEKEGNFWHIKYPVVGSEEFLEIATTRPETLLGDSAVAVNPSDERYAHLVGKMLKLPLTDREIPVIADDYVDVEFGTGAVKITPAHDPNDFEVGKRHNLPQIRVMDDSGVINHLGGKYKGLDRYEARKQMVADLEELGLLVKIKPHTHNVGTHDRCGTVVEPIISKQWYVKMQSLADPAIEVVRNKGTKFVPERFEKTYFNWMENIQDWCISRQLWWGHRIPVFYCKDCGEIMVELEDPTKCCKCGSENIEQDKDVLDTWFSSALWPFSTLGWPDRTDDLEFFYPTSTLVTGYDIIFFWVARMIFSGIHNMGETPFDTVLIHGIIRDAQGRKMSKSLGNGVDPLEVIDEYGADALRFMLVTGNAPGNDIRYIPERVEAARNFANKIWNASRFVMMNLDRELMDKYKDCQEYSLADQWILSRTNSLIKEVTENMEKYELGIALQKVHDFLWTEFCDYYIELVKPVLYGDDEKAKGVVFNVLYTVLNTGLKLLHPVMPFITEEIYTHLSTETESITIATWPTYDEALNNEKAEKDMTFIMEAIRSLRNLRAEMNVPPSRKAKVMAYASEEAKDAFINGGAYLEKLASASEVTFLDNKDNLDNNLVSVVVKGGELFLPLLDLVDREKELERLNKEKTKLEGEILRVEKKLSNERFVSKAPEAVVNEERAKGVKYKEMLEAVLERIEALQ.

The 'HIGH' region motif lies at 47-57 (PNITGKLHLGH). Residues 526–530 (KMSKS) carry the 'KMSKS' region motif. Lysine 529 serves as a coordination point for ATP. A coiled-coil region spans residues 810–845 (LLDLVDREKELERLNKEKTKLEGEILRVEKKLSNER).

It belongs to the class-I aminoacyl-tRNA synthetase family. ValS type 1 subfamily. Monomer.

It localises to the cytoplasm. It carries out the reaction tRNA(Val) + L-valine + ATP = L-valyl-tRNA(Val) + AMP + diphosphate. Catalyzes the attachment of valine to tRNA(Val). As ValRS can inadvertently accommodate and process structurally similar amino acids such as threonine, to avoid such errors, it has a 'posttransfer' editing activity that hydrolyzes mischarged Thr-tRNA(Val) in a tRNA-dependent manner. This chain is Valine--tRNA ligase, found in Clostridium perfringens (strain 13 / Type A).